A 302-amino-acid chain; its full sequence is DNA-binding transcriptional activator HetR (302 aa).

Residue S153 is part of the active site.

It belongs to the peptidase S48 family. As to quaternary structure, homodimer; disulfide-linked.

In terms of biological role, might be involved in temporal and/or spatial regulation of nitrogen fixation. Dimerization is required for DNA-binding. Has both a protease and a DNA-binding activity. This is DNA-binding transcriptional activator HetR from Trichodesmium erythraeum (strain IMS101).